Here is a 257-residue protein sequence, read N- to C-terminus: MYSFTAYANSDIVAFHLLKFLSSENNIEISYADEDTIPEYVSIRDLKAGDKTTIDLYPLVAWKVIAQEDITTGDRVSVGKNGQVKKTTDLRTAFGYAVSLAKAGQLVTVAISTVFDTIITPDDLGNVDDDVKAFLKSNATDANKAKLRDLLVSNLDVKAFLNGSTSEDNKINLRNLLVSNPAILAFLNANPDTDTQTTLRTMIGAGTPYTLPAATTTTLGGVKRIPAFGNSTATDVATLVKDFNNLLAAMRTAGYIL.

Its subcellular location is the virion. This is Head fiber protein (8.5) from Bacillus phage Nf (Bacteriophage Nf).